The primary structure comprises 99 residues: Small ribosomal subunit protein uS19 (99 aa).

The interval 77–99 is disordered; the sequence is TRTFHGHSGDKKAKVAKGGPGGR.

Belongs to the universal ribosomal protein uS19 family.

In terms of biological role, protein S19 forms a complex with S13 that binds strongly to the 16S ribosomal RNA. The protein is Small ribosomal subunit protein uS19 of Sorangium cellulosum (strain So ce56) (Polyangium cellulosum (strain So ce56)).